Here is a 162-residue protein sequence, read N- to C-terminus: HTH-type transcriptional regulator IscR (162 aa).

The 130-residue stretch at 2–131 (RLTSKGRYAV…NNITLGELVN (130 aa)) folds into the HTH rrf2-type domain. Residues 28–51 (LADISERQGISLSYLEQLFSRLRK) constitute a DNA-binding region (H-T-H motif). Positions 92, 98, and 104 each coordinate [2Fe-2S] cluster. The disordered stretch occupies residues 140–162 (GRQHTHDAPRTRTQDAIDVKLRA). Residues 143–162 (HTHDAPRTRTQDAIDVKLRA) are compositionally biased toward basic and acidic residues.

Requires [2Fe-2S] cluster as cofactor.

In terms of biological role, regulates the transcription of several operons and genes involved in the biogenesis of Fe-S clusters and Fe-S-containing proteins. This Shigella flexneri protein is HTH-type transcriptional regulator IscR.